Consider the following 139-residue polypeptide: Aspartate 1-decarboxylase (139 aa).

The active-site Schiff-base intermediate with substrate; via pyruvic acid is serine 25. Serine 25 is modified (pyruvic acid (Ser)). Substrate is bound at residue threonine 57. Tyrosine 58 (proton donor) is an active-site residue. 73-75 (GAA) contributes to the substrate binding site. Residues 117–139 (TGSDPADAPAGSGLLRGDRPAGR) are disordered.

It belongs to the PanD family. In terms of assembly, heterooctamer of four alpha and four beta subunits. It depends on pyruvate as a cofactor. In terms of processing, is synthesized initially as an inactive proenzyme, which is activated by self-cleavage at a specific serine bond to produce a beta-subunit with a hydroxyl group at its C-terminus and an alpha-subunit with a pyruvoyl group at its N-terminus.

The protein localises to the cytoplasm. The catalysed reaction is L-aspartate + H(+) = beta-alanine + CO2. It participates in cofactor biosynthesis; (R)-pantothenate biosynthesis; beta-alanine from L-aspartate: step 1/1. Catalyzes the pyruvoyl-dependent decarboxylation of aspartate to produce beta-alanine. This Nocardioides sp. (strain ATCC BAA-499 / JS614) protein is Aspartate 1-decarboxylase.